The following is a 179-amino-acid chain: MFSILKRTDHLEESFLKNPNDNLKELENIIIEQEEALRFSSLSYADCYSLGVIVRDLYAKAAYTAPIVIDITLNGHQVFHLAYDGSSPDNDAFIKRKYATVQRFRMSSMRMGLMMAQQGTTMPAKYDVPAEEYGAFGGGFPIKLTSGIQIGVFCISGLRQIQDHCLIARSIAEFLTTKQ.

The protein belongs to the UPF0303 family.

This chain is UPF0303 protein P4H10.12, found in Schizosaccharomyces pombe (strain 972 / ATCC 24843) (Fission yeast).